Consider the following 317-residue polypeptide: Pantothenate kinase (317 aa).

101-108 (GSVAVGKS) contributes to the ATP binding site.

Belongs to the prokaryotic pantothenate kinase family.

It localises to the cytoplasm. The catalysed reaction is (R)-pantothenate + ATP = (R)-4'-phosphopantothenate + ADP + H(+). Its pathway is cofactor biosynthesis; coenzyme A biosynthesis; CoA from (R)-pantothenate: step 1/5. The chain is Pantothenate kinase from Actinobacillus succinogenes (strain ATCC 55618 / DSM 22257 / CCUG 43843 / 130Z).